A 639-amino-acid chain; its full sequence is Carbon monoxide dehydrogenase (639 aa).

[4Fe-4S] cluster-binding residues include cysteine 41, cysteine 49, cysteine 50, cysteine 53, cysteine 58, and cysteine 72. Histidine 265, cysteine 300, cysteine 338, cysteine 451, cysteine 481, and cysteine 531 together coordinate [Ni-4Fe-4S] cluster.

It belongs to the Ni-containing carbon monoxide dehydrogenase family. Homodimer. Requires [4Fe-4S] cluster as cofactor. [Ni-4Fe-4S] cluster serves as cofactor.

It localises to the cytoplasm. It is found in the cell inner membrane. The enzyme catalyses CO + 2 oxidized [2Fe-2S]-[ferredoxin] + H2O = 2 reduced [2Fe-2S]-[ferredoxin] + CO2 + 2 H(+). In terms of biological role, allows growth in a CO-dependent manner in the dark. CODH oxidizes carbon monoxide coupled, via CooF, to the reduction of a hydrogen cation by a hydrogenase (possibly CooH). The sequence is that of Carbon monoxide dehydrogenase (cooS) from Rhodospirillum rubrum.